A 204-amino-acid polypeptide reads, in one-letter code: Large ribosomal subunit protein bL25 (204 aa).

Belongs to the bacterial ribosomal protein bL25 family. CTC subfamily. As to quaternary structure, part of the 50S ribosomal subunit; part of the 5S rRNA/L5/L18/L25 subcomplex. Contacts the 5S rRNA. Binds to the 5S rRNA independently of L5 and L18.

This is one of the proteins that binds to the 5S RNA in the ribosome where it forms part of the central protuberance. The chain is Large ribosomal subunit protein bL25 from Pseudomonas syringae pv. syringae (strain B728a).